A 368-amino-acid polypeptide reads, in one-letter code: Phosphate acyltransferase (368 aa).

Positions 334-368 (AAPLGESGRDADGAGQASPSAGQPAEPSAALSSKT) are disordered.

This sequence belongs to the PlsX family. In terms of assembly, homodimer. Probably interacts with PlsY.

The protein resides in the cytoplasm. The enzyme catalyses a fatty acyl-[ACP] + phosphate = an acyl phosphate + holo-[ACP]. Its pathway is lipid metabolism; phospholipid metabolism. Functionally, catalyzes the reversible formation of acyl-phosphate (acyl-PO(4)) from acyl-[acyl-carrier-protein] (acyl-ACP). This enzyme utilizes acyl-ACP as fatty acyl donor, but not acyl-CoA. This Burkholderia thailandensis (strain ATCC 700388 / DSM 13276 / CCUG 48851 / CIP 106301 / E264) protein is Phosphate acyltransferase.